The sequence spans 483 residues: MKATKETLSPTRVKLTVEVPFDELKPSLEATYRKLARQVRVSGFRPGKVPPRILDQRLGRGVILDEAVQEALPQLYSEAVQAEEVDVLSRPEVDITEFADGGQLVFTAEVDVRPEVTLPEFSELEITVDAVEVTDEQVEEQLGALRDRFAVLTPVERAVQAGDYVSLDLSAEADGTPIDGAEATGLSYEVGSGNLVEGLDDAIIGATDGETRTFTTELLSGEQAGQPAQVTATVRGVKEKELPALDDDFATTASEFDTLDELRADIRTRLEQSRRTEQVGQAREKLLESLLERVEVPVPGSLLAGEIEAREHRLSRELEYIGTDRPSYLETLGQTEEEFDAEVRESAGKAIRSQFILDAVIDAESIGIDQGELMEQLILRAQRSGVQPDVYAQQLAQGEGLTALMADVLRTKALFLLLENAKVVDGAGTPVELALPARSQPDTDADADHDRDVTVAAEAVAPGDGDATVEPVEPVEAETDGNG.

The PPIase FKBP-type domain occupies 162–243 (GDYVSLDLSA…VRGVKEKELP (82 aa)). Positions 459–483 (AVAPGDGDATVEPVEPVEAETDGNG) are disordered. Over residues 473–483 (EPVEAETDGNG) the composition is skewed to acidic residues.

It belongs to the FKBP-type PPIase family. Tig subfamily.

Its subcellular location is the cytoplasm. The catalysed reaction is [protein]-peptidylproline (omega=180) = [protein]-peptidylproline (omega=0). Functionally, involved in protein export. Acts as a chaperone by maintaining the newly synthesized protein in an open conformation. Functions as a peptidyl-prolyl cis-trans isomerase. The protein is Trigger factor of Frankia casuarinae (strain DSM 45818 / CECT 9043 / HFP020203 / CcI3).